An 809-amino-acid polypeptide reads, in one-letter code: Chorion peroxidase (809 aa).

An N-terminal signal peptide occupies residues M1–A21. A propeptide spanning residues A22 to H223 is cleaved from the precursor. The tract at residues D36 to K55 is disordered. An N-linked (GlcNAc...) asparagine glycan is attached at N110. An N-acetylcysteine; in Chorion peroxidase light chain modification is found at C224. A disulfide bridge connects residues C230 and C244. The active-site Proton acceptor is the H320. A disulfide bond links C448 and C457. H568 is a heme b binding site. C765 and C794 are joined by a disulfide.

Belongs to the peroxidase family. XPO subfamily. In terms of assembly, heterodimer. Heme b is required as a cofactor. As to expression, expressed at low levels in the germarium and early follicles. Expression becomes progressively stronger during vitellogenesis, and is highly expressed in germ cells and somatic cells. A subset of follicle cells, termed border cells (BC), exhibit a high level of expression.

The protein resides in the secreted. It carries out the reaction 2 a phenolic donor + H2O2 = 2 a phenolic radical donor + 2 H2O. In terms of biological role, required for ovarian follicle maturation. Involved in the formation of a rigid and insoluble egg chorion by catalyzing chorion protein cross-linking through dityrosine formation and phenol oxidase-catalyzed chorion melanization. The protein is Chorion peroxidase (Pxt) of Drosophila melanogaster (Fruit fly).